The primary structure comprises 135 residues: ATP synthase epsilon chain (135 aa).

It belongs to the ATPase epsilon chain family. As to quaternary structure, F-type ATPases have 2 components, CF(1) - the catalytic core - and CF(0) - the membrane proton channel. CF(1) has five subunits: alpha(3), beta(3), gamma(1), delta(1), epsilon(1). CF(0) has three main subunits: a, b and c.

It is found in the cell inner membrane. In terms of biological role, produces ATP from ADP in the presence of a proton gradient across the membrane. The sequence is that of ATP synthase epsilon chain from Allorhizobium ampelinum (strain ATCC BAA-846 / DSM 112012 / S4) (Agrobacterium vitis (strain S4)).